The following is a 320-amino-acid chain: Mitochondrial oxaloacetate transport protein (320 aa).

Solcar repeat units follow at residues 21 to 114 (LGPV…IRRT), 126 to 218 (NKLA…AKRM), and 227 to 313 (EGMI…TNKL). The next 6 membrane-spanning stretches (helical) occupy residues 26 to 47 (GFLSGGLAACGAVTLTNPFEVI), 91 to 111 (GTAYVYQICLNGCRLGFYEPI), 129 to 145 (AINVASGAGSGLCGALF), 197 to 217 (AILRTVSGSSVQLPIYNWAKR), 233 to 253 (LTASAVSGFGVCCTMQIFDTV), and 285 to 306 (LYKGFGAHLARIAPHTIFCLTF).

Belongs to the mitochondrial carrier (TC 2.A.29) family.

The protein resides in the mitochondrion inner membrane. It catalyses the reaction a dicarboxylate(in) + sulfate(out) = a dicarboxylate(out) + sulfate(in). The enzyme catalyses (2S)-2-isopropylmalate(in) + sulfate(out) = (2S)-2-isopropylmalate(out) + sulfate(in). The catalysed reaction is (2R,3S)-3-isopropylmalate(in) + sulfate(out) = (2R,3S)-3-isopropylmalate(out) + sulfate(in). It carries out the reaction malonate(in) + sulfate(out) = malonate(out) + sulfate(in). It catalyses the reaction oxaloacetate(in) + sulfate(out) = oxaloacetate(out) + sulfate(in). The enzyme catalyses thiosulfate(in) + sulfate(out) = thiosulfate(out) + sulfate(in). Its function is as follows. Antiporter that exchanges dicarboxylates and sulfur oxoanions across the inner membrane of mitochondria. Exports alpha-isopropylmalate from mitochondrial matrix to the cytosol, where it serves as a precursor for leucine biosynthesis. This Schizosaccharomyces pombe (strain 972 / ATCC 24843) (Fission yeast) protein is Mitochondrial oxaloacetate transport protein (oac1).